A 240-amino-acid polypeptide reads, in one-letter code: 1-(5-phosphoribosyl)-5-[(5-phosphoribosylamino)methylideneamino] imidazole-4-carboxamide isomerase (240 aa).

D9 (proton acceptor) is an active-site residue. D131 (proton donor) is an active-site residue.

The protein belongs to the HisA/HisF family.

Its subcellular location is the cytoplasm. The enzyme catalyses 1-(5-phospho-beta-D-ribosyl)-5-[(5-phospho-beta-D-ribosylamino)methylideneamino]imidazole-4-carboxamide = 5-[(5-phospho-1-deoxy-D-ribulos-1-ylimino)methylamino]-1-(5-phospho-beta-D-ribosyl)imidazole-4-carboxamide. The protein operates within amino-acid biosynthesis; L-histidine biosynthesis; L-histidine from 5-phospho-alpha-D-ribose 1-diphosphate: step 4/9. This Cytophaga hutchinsonii (strain ATCC 33406 / DSM 1761 / CIP 103989 / NBRC 15051 / NCIMB 9469 / D465) protein is 1-(5-phosphoribosyl)-5-[(5-phosphoribosylamino)methylideneamino] imidazole-4-carboxamide isomerase.